Consider the following 58-residue polypeptide: Preprotein translocase subunit SecG (58 aa).

The Cytoplasmic portion of the chain corresponds to 1–33; the sequence is MARRRKYEGLNPFVAAGLIKFSEEGELEKIKLS. The helical transmembrane segment at 34 to 55 threads the bilayer; it reads PKAAIAISLAIIAAILALNLLL. The Extracellular segment spans residues 56–58; the sequence is PPP.

This sequence belongs to the SEC61-beta family. In terms of assembly, component of the protein translocase complex. Heterotrimer consisting of alpha (SecY), beta (SecG) and gamma (SecE) subunits. Can form oligomers of the heterotrimer.

It is found in the cell membrane. Its function is as follows. Involved in protein export. The function of the beta subunit is unknown, but it may be involved in stabilization of the trimeric complex. The polypeptide is Preprotein translocase subunit SecG (Pyrobaculum calidifontis (strain DSM 21063 / JCM 11548 / VA1)).